Reading from the N-terminus, the 287-residue chain is Co-chaperone protein DjlA (287 aa).

At 1–6 (MNFIGK) the chain is on the periplasmic side. The helical transmembrane segment at 7–30 (FLGLIIGWKLGGFFGAICGVILGH) threads the bilayer. The Cytoplasmic portion of the chain corresponds to 31–287 (LGDKKLYELG…DLICKTKGWK (257 aa)). The J domain occupies 221–287 (DAYKVLGVSA…DLICKTKGWK (67 aa)).

As to quaternary structure, homodimer.

Its subcellular location is the cell inner membrane. Its function is as follows. Regulatory DnaK co-chaperone. Direct interaction between DnaK and DjlA is needed for the induction of the wcaABCDE operon, involved in the synthesis of a colanic acid polysaccharide capsule, possibly through activation of the RcsB/RcsC phosphotransfer signaling pathway. The colanic acid capsule may help the bacterium survive conditions outside the host. This chain is Co-chaperone protein DjlA, found in Pasteurella multocida (strain Pm70).